A 243-amino-acid polypeptide reads, in one-letter code: Leucyl/phenylalanyl-tRNA--protein transferase (243 aa).

Residues 1 to 22 form a disordered region; that stretch reads MHSQPYLLSPTPNTPFPPAEHA.

The protein belongs to the L/F-transferase family.

It is found in the cytoplasm. It catalyses the reaction N-terminal L-lysyl-[protein] + L-leucyl-tRNA(Leu) = N-terminal L-leucyl-L-lysyl-[protein] + tRNA(Leu) + H(+). The enzyme catalyses N-terminal L-arginyl-[protein] + L-leucyl-tRNA(Leu) = N-terminal L-leucyl-L-arginyl-[protein] + tRNA(Leu) + H(+). The catalysed reaction is L-phenylalanyl-tRNA(Phe) + an N-terminal L-alpha-aminoacyl-[protein] = an N-terminal L-phenylalanyl-L-alpha-aminoacyl-[protein] + tRNA(Phe). Functionally, functions in the N-end rule pathway of protein degradation where it conjugates Leu, Phe and, less efficiently, Met from aminoacyl-tRNAs to the N-termini of proteins containing an N-terminal arginine or lysine. The sequence is that of Leucyl/phenylalanyl-tRNA--protein transferase from Xylella fastidiosa (strain M23).